A 577-amino-acid chain; its full sequence is E3 ubiquitin-protein ligase MSL2 (577 aa).

Residues 1–116 (MNPVNATALY…CEYITQTTLA (116 aa)) form a sufficient for interaction with MSL1 region. The Zn(2+) site is built by C44, C47, C62, H64, C67, C70, C81, and C84. The segment at 44 to 85 (CCVCGHLLQDPIAPTNSTCQHYVCKTCKGKKMMMKPSCSWCK) adopts an RING-type zinc-finger fold. K375 is covalently cross-linked (Glycyl lysine isopeptide (Lys-Gly) (interchain with G-Cter in SUMO2)). Residues 405-428 (TKSMKKSHEHGSKKSHSKSKPGIL) are disordered. The span at 407–423 (SMKKSHEHGSKKSHSKS) shows a compositional bias: basic residues. Phosphoserine is present on S447. One can recognise a CXC MSL2-type domain in the interval 457–508 (QEKKGCKCGRATQNPSVLTCRGQRCPCYSNRKACLDCICRGCQNSYMANGEK). C462, C464, C476, C481, C483, C490, C493, C495, and C498 together coordinate Zn(2+).

This sequence belongs to the MSL2 family. Component of a multisubunit histone acetyltransferase complex (MSL) at least composed of the KAT8/MOF/MYST1, MSL1/hampin, MSL2 and MSL3. Forms a MSL heterotetrameric core with MSL1.

The protein localises to the nucleus. Its subcellular location is the chromosome. The catalysed reaction is S-ubiquitinyl-[E2 ubiquitin-conjugating enzyme]-L-cysteine + [acceptor protein]-L-lysine = [E2 ubiquitin-conjugating enzyme]-L-cysteine + N(6)-ubiquitinyl-[acceptor protein]-L-lysine.. The protein operates within protein modification; protein ubiquitination. Non-catalytic component of the MSL histone acetyltransferase complex, a multiprotein complex that mediates the majority of histone H4 acetylation at 'Lys-16' (H4K16ac), an epigenetic mark that prevents chromatin compaction. The MSL complex is required for chromosome stability and genome integrity by maintaining homeostatic levels of H4K16ac. The MSL complex is also involved in gene dosage by promoting up-regulation of genes expressed by the X chromosome. X up-regulation is required to compensate for autosomal biallelic expression. The MSL complex also participates in gene dosage compensation by promoting expression of Tsix non-coding RNA. MSL2 plays a key role in gene dosage by ensuring biallelic expression of a subset of dosage-sensitive genes, including many haploinsufficient genes. Acts by promoting promoter-enhancer contacts, thereby preventing DNA methylation of one allele and creating a methylation-free environment for methylation-sensitive transcription factors such as SP1, KANSL1 and KANSL3. Also acts as an E3 ubiquitin ligase that promotes monoubiquitination of histone H2B at 'Lys-35' (H2BK34Ub), but not that of H2A. This activity is greatly enhanced by heterodimerization with MSL1. H2B ubiquitination in turn stimulates histone H3 methylation at 'Lys-4' (H3K4me) and 'Lys-79' (H3K79me) and leads to gene activation, including that of HOXA9 and MEIS1. In Mus musculus (Mouse), this protein is E3 ubiquitin-protein ligase MSL2.